We begin with the raw amino-acid sequence, 31 residues long: MSILIGYIILLACAFGLAAGLFFGLSLIKLI.

The helical transmembrane segment at 3 to 23 threads the bilayer; sequence ILIGYIILLACAFGLAAGLFF.

The protein belongs to the PetL family. In terms of assembly, the 4 large subunits of the cytochrome b6-f complex are cytochrome b6, subunit IV (17 kDa polypeptide, PetD), cytochrome f and the Rieske protein, while the 4 small subunits are PetG, PetL, PetM and PetN. The complex functions as a dimer.

It localises to the plastid. It is found in the chloroplast thylakoid membrane. In terms of biological role, component of the cytochrome b6-f complex, which mediates electron transfer between photosystem II (PSII) and photosystem I (PSI), cyclic electron flow around PSI, and state transitions. PetL is important for photoautotrophic growth as well as for electron transfer efficiency and stability of the cytochrome b6-f complex. The sequence is that of Cytochrome b6-f complex subunit 6 from Rhodomonas salina (Cryptomonas salina).